Here is a 290-residue protein sequence, read N- to C-terminus: Protein-lysine methyltransferase METTL21E (290 aa).

S-adenosyl-L-methionine is bound by residues W96, 124–126, D145, W176, and A197; that span reads GAG.

The protein belongs to the methyltransferase superfamily. METTL21 family.

In terms of biological role, protein-lysine methyltransferase. This chain is Protein-lysine methyltransferase METTL21E (METTL21E), found in Bos taurus (Bovine).